A 185-amino-acid chain; its full sequence is Ribosome-recycling factor (185 aa).

Belongs to the RRF family.

The protein localises to the cytoplasm. Responsible for the release of ribosomes from messenger RNA at the termination of protein biosynthesis. May increase the efficiency of translation by recycling ribosomes from one round of translation to another. The sequence is that of Ribosome-recycling factor from Shewanella baltica (strain OS185).